The primary structure comprises 234 residues: Leucyl/phenylalanyl-tRNA--protein transferase (234 aa).

The protein belongs to the L/F-transferase family.

The protein localises to the cytoplasm. It catalyses the reaction N-terminal L-lysyl-[protein] + L-leucyl-tRNA(Leu) = N-terminal L-leucyl-L-lysyl-[protein] + tRNA(Leu) + H(+). The catalysed reaction is N-terminal L-arginyl-[protein] + L-leucyl-tRNA(Leu) = N-terminal L-leucyl-L-arginyl-[protein] + tRNA(Leu) + H(+). It carries out the reaction L-phenylalanyl-tRNA(Phe) + an N-terminal L-alpha-aminoacyl-[protein] = an N-terminal L-phenylalanyl-L-alpha-aminoacyl-[protein] + tRNA(Phe). In terms of biological role, functions in the N-end rule pathway of protein degradation where it conjugates Leu, Phe and, less efficiently, Met from aminoacyl-tRNAs to the N-termini of proteins containing an N-terminal arginine or lysine. This chain is Leucyl/phenylalanyl-tRNA--protein transferase, found in Escherichia coli O81 (strain ED1a).